The following is a 498-amino-acid chain: N-succinylglutamate 5-semialdehyde dehydrogenase 1 (498 aa).

231-236 (GSSNTG) contacts NAD(+). Residues Glu-254 and Cys-288 contribute to the active site.

The protein belongs to the aldehyde dehydrogenase family. AstD subfamily.

The catalysed reaction is N-succinyl-L-glutamate 5-semialdehyde + NAD(+) + H2O = N-succinyl-L-glutamate + NADH + 2 H(+). It functions in the pathway amino-acid degradation; L-arginine degradation via AST pathway; L-glutamate and succinate from L-arginine: step 4/5. In terms of biological role, catalyzes the NAD-dependent reduction of succinylglutamate semialdehyde into succinylglutamate. The sequence is that of N-succinylglutamate 5-semialdehyde dehydrogenase 1 from Shewanella denitrificans (strain OS217 / ATCC BAA-1090 / DSM 15013).